We begin with the raw amino-acid sequence, 187 residues long: Elongation factor P (187 aa).

This sequence belongs to the elongation factor P family.

The protein resides in the cytoplasm. It participates in protein biosynthesis; polypeptide chain elongation. Its function is as follows. Involved in peptide bond synthesis. Stimulates efficient translation and peptide-bond synthesis on native or reconstituted 70S ribosomes in vitro. Probably functions indirectly by altering the affinity of the ribosome for aminoacyl-tRNA, thus increasing their reactivity as acceptors for peptidyl transferase. In Corynebacterium jeikeium (strain K411), this protein is Elongation factor P.